The sequence spans 387 residues: Delta(12)-acyl-lipid-desaturase (387 aa).

The interval 1–31 (MGAGGRMTVPNKWEGEGDEKSQKPVQRVPSA) is disordered. The span at 13–22 (WEGEGDEKSQ) shows a compositional bias: basic and acidic residues. The next 2 helical transmembrane spans lie at 58 to 78 (SYVL…TTYI) and 88 to 108 (AAWP…WVIA). A Histidine box-1 motif is present at residues 109–113 (HECGH). The helical transmembrane segment at 121 to 141 (WVDDCVGLVLHSALLVPYFSW) threads the bilayer. The Histidine box-2 motif lies at 145–149 (HRRHH). 3 helical membrane passes run 183–203 (VMTL…LNVS), 229–249 (IYIS…IAAA), and 251–271 (GLAW…AFLV). A Histidine box-3 motif is present at residues 319–323 (HVAHH).

This sequence belongs to the fatty acid desaturase type 1 family.

The protein localises to the membrane. It participates in lipid metabolism; polyunsaturated fatty acid biosynthesis. Functionally, delta(12)-fatty acid desaturase producing in a heterologous system linoleic acid (18:2(9Z,12Z)) and to a lower extent hexadecadienoic acid (16:2(9Z,12Z)). The polypeptide is Delta(12)-acyl-lipid-desaturase (Punica granatum (Pomegranate)).